Reading from the N-terminus, the 254-residue chain is tRNA (guanine-N(1)-)-methyltransferase (254 aa).

Residues glycine 113 and 133–138 (IGDYVL) each bind S-adenosyl-L-methionine.

Belongs to the RNA methyltransferase TrmD family. In terms of assembly, homodimer.

The protein resides in the cytoplasm. It catalyses the reaction guanosine(37) in tRNA + S-adenosyl-L-methionine = N(1)-methylguanosine(37) in tRNA + S-adenosyl-L-homocysteine + H(+). Functionally, specifically methylates guanosine-37 in various tRNAs. The sequence is that of tRNA (guanine-N(1)-)-methyltransferase from Edwardsiella ictaluri (strain 93-146).